Reading from the N-terminus, the 264-residue chain is Flagellar basal-body rod protein FlgG (264 aa).

This sequence belongs to the flagella basal body rod proteins family. As to quaternary structure, the basal body constitutes a major portion of the flagellar organelle and consists of four rings (L,P,S, and M) mounted on a central rod. The rod consists of about 26 subunits of FlgG in the distal portion, and FlgB, FlgC and FlgF are thought to build up the proximal portion of the rod with about 6 subunits each.

It is found in the bacterial flagellum basal body. The sequence is that of Flagellar basal-body rod protein FlgG (flgG) from Bacillus subtilis (strain 168).